The following is a 252-amino-acid chain: Triosephosphate isomerase (252 aa).

10 to 12 (NWK) is a substrate binding site. The active-site Electrophile is the His-96. Catalysis depends on Glu-168, which acts as the Proton acceptor. Residues Gly-174, Ser-213, and 234–235 (GG) contribute to the substrate site.

The protein belongs to the triosephosphate isomerase family. In terms of assembly, homodimer.

The protein localises to the cytoplasm. It catalyses the reaction D-glyceraldehyde 3-phosphate = dihydroxyacetone phosphate. The protein operates within carbohydrate biosynthesis; gluconeogenesis. It functions in the pathway carbohydrate degradation; glycolysis; D-glyceraldehyde 3-phosphate from glycerone phosphate: step 1/1. Functionally, involved in the gluconeogenesis. Catalyzes stereospecifically the conversion of dihydroxyacetone phosphate (DHAP) to D-glyceraldehyde-3-phosphate (G3P). The polypeptide is Triosephosphate isomerase (Nitrosomonas eutropha (strain DSM 101675 / C91 / Nm57)).